The chain runs to 56 residues: Large ribosomal subunit protein bL32 (56 aa).

The disordered stretch occupies residues 1–21; sequence MAVQQNRKTRSRRGMRRSHDA. A compositionally biased stretch (basic residues) spans 7-16; sequence RKTRSRRGMR.

Belongs to the bacterial ribosomal protein bL32 family.

The sequence is that of Large ribosomal subunit protein bL32 from Vibrio cholerae serotype O1 (strain ATCC 39541 / Classical Ogawa 395 / O395).